Here is a 135-residue protein sequence, read N- to C-terminus: Small ribosomal subunit protein bS16 (135 aa).

The protein belongs to the bacterial ribosomal protein bS16 family.

This is Small ribosomal subunit protein bS16 from Prosthecochloris aestuarii (strain DSM 271 / SK 413).